A 98-amino-acid polypeptide reads, in one-letter code: NADH-ubiquinone oxidoreductase chain 4L (98 aa).

A run of 3 helical transmembrane segments spans residues 1 to 21, 29 to 49, and 61 to 81; these read MPVIYINLIAAFFMAFMGLLI, SLLCLEGMMLSLFILNSTLAL, and IILLVFAACEAALGLSLLVMV.

It belongs to the complex I subunit 4L family. As to quaternary structure, core subunit of respiratory chain NADH dehydrogenase (Complex I) which is composed of 45 different subunits.

The protein localises to the mitochondrion inner membrane. It carries out the reaction a ubiquinone + NADH + 5 H(+)(in) = a ubiquinol + NAD(+) + 4 H(+)(out). In terms of biological role, core subunit of the mitochondrial membrane respiratory chain NADH dehydrogenase (Complex I) which catalyzes electron transfer from NADH through the respiratory chain, using ubiquinone as an electron acceptor. Part of the enzyme membrane arm which is embedded in the lipid bilayer and involved in proton translocation. This Echinops telfairi (Lesser hedgehog tenrec) protein is NADH-ubiquinone oxidoreductase chain 4L (MT-ND4L).